Consider the following 451-residue polypeptide: Methylenetetrahydrofolate--tRNA-(uracil-5-)-methyltransferase TrmFO (451 aa).

10–15 (GGGLAG) provides a ligand contact to FAD.

Belongs to the MnmG family. TrmFO subfamily. It depends on FAD as a cofactor.

The protein localises to the cytoplasm. The enzyme catalyses uridine(54) in tRNA + (6R)-5,10-methylene-5,6,7,8-tetrahydrofolate + NADH + H(+) = 5-methyluridine(54) in tRNA + (6S)-5,6,7,8-tetrahydrofolate + NAD(+). It carries out the reaction uridine(54) in tRNA + (6R)-5,10-methylene-5,6,7,8-tetrahydrofolate + NADPH + H(+) = 5-methyluridine(54) in tRNA + (6S)-5,6,7,8-tetrahydrofolate + NADP(+). In terms of biological role, catalyzes the folate-dependent formation of 5-methyl-uridine at position 54 (M-5-U54) in all tRNAs. This Anaeromyxobacter sp. (strain Fw109-5) protein is Methylenetetrahydrofolate--tRNA-(uracil-5-)-methyltransferase TrmFO.